Here is a 92-residue protein sequence, read N- to C-terminus: DNA-directed RNA polymerase subunit omega (92 aa).

It belongs to the RNA polymerase subunit omega family. As to quaternary structure, the RNAP catalytic core consists of 2 alpha, 1 beta, 1 beta' and 1 omega subunit. When a sigma factor is associated with the core the holoenzyme is formed, which can initiate transcription.

The catalysed reaction is RNA(n) + a ribonucleoside 5'-triphosphate = RNA(n+1) + diphosphate. Its function is as follows. Promotes RNA polymerase assembly. Latches the N- and C-terminal regions of the beta' subunit thereby facilitating its interaction with the beta and alpha subunits. The protein is DNA-directed RNA polymerase subunit omega of Acinetobacter baumannii (strain AB307-0294).